The primary structure comprises 493 residues: Cysteine sulfinic acid decarboxylase (493 aa).

K305 is modified (N6-(pyridoxal phosphate)lysine).

The protein belongs to the group II decarboxylase family. Homodimer. It depends on pyridoxal 5'-phosphate as a cofactor. Expressed in kidney and liver not detected in lymphoid tissues and lung. Expressed in kidney, liver and brain. 7 and 4 times higher expression in kidney and liver than in brain, respectively. Low level of detection in skeletal muscle. Expressed in brain, olfactory bulb, liver, skeletal muscle and kidney with the highest expression in liver and lowest in skeletal muscle (at protein level).

It catalyses the reaction L-aspartate + H(+) = beta-alanine + CO2. The enzyme catalyses 3-sulfino-L-alanine + H(+) = hypotaurine + CO2. It carries out the reaction L-cysteate + H(+) = taurine + CO2. It functions in the pathway organosulfur biosynthesis; taurine biosynthesis; hypotaurine from L-cysteine: step 2/2. Its activity is regulated as follows. Activated by Mn(2+). Inhibited by bis-carboxymethyl-trithiocarbonate, ethylxanthogenacetic acid and 2,5-disulfoaniline. Not affected by Li(+) within 0.05-40 mM concentration range. Its function is as follows. Catalyzes the decarboxylation of L-aspartate, 3-sulfino-L-alanine (cysteine sulfinic acid), and L-cysteate to beta-alanine, hypotaurine and taurine, respectively. The preferred substrate is 3-sulfino-L-alanine. Does not exhibit any decarboxylation activity toward glutamate. In Mus musculus (Mouse), this protein is Cysteine sulfinic acid decarboxylase.